The chain runs to 687 residues: FAD-dependent oxidoreductase domain-containing protein 2 (687 aa).

The N-terminal stretch at 1–22 is a signal peptide; it reads MSVIQLVFRLLCVLDLLLAVSA. 2 N-linked (GlcNAc...) asparagine glycosylation sites follow: asparagine 29 and asparagine 305.

Belongs to the FOXRED2 family. The cofactor is FAD. Post-translationally, N-glycosylated.

The protein resides in the endoplasmic reticulum lumen. Functionally, probable flavoprotein which may function in endoplasmic reticulum associated degradation (ERAD). May bind non-native proteins in the endoplasmic reticulum and target them to the ubiquitination machinery for subsequent degradation. This is FAD-dependent oxidoreductase domain-containing protein 2 (foxred2) from Danio rerio (Zebrafish).